A 269-amino-acid polypeptide reads, in one-letter code: 3-methyl-2-oxobutanoate hydroxymethyltransferase (269 aa).

Positions 51 and 90 each coordinate Mg(2+). Residues 51-52, Asp90, and Lys120 each bind 3-methyl-2-oxobutanoate; that span reads DS. Glu122 lines the Mg(2+) pocket. The active-site Proton acceptor is Glu187.

It belongs to the PanB family. Homodecamer; pentamer of dimers. The cofactor is Mg(2+).

Its subcellular location is the cytoplasm. The catalysed reaction is 3-methyl-2-oxobutanoate + (6R)-5,10-methylene-5,6,7,8-tetrahydrofolate + H2O = 2-dehydropantoate + (6S)-5,6,7,8-tetrahydrofolate. It functions in the pathway cofactor biosynthesis; (R)-pantothenate biosynthesis; (R)-pantoate from 3-methyl-2-oxobutanoate: step 1/2. Its function is as follows. Catalyzes the reversible reaction in which hydroxymethyl group from 5,10-methylenetetrahydrofolate is transferred onto alpha-ketoisovalerate to form ketopantoate. The polypeptide is 3-methyl-2-oxobutanoate hydroxymethyltransferase (Tropheryma whipplei (strain TW08/27) (Whipple's bacillus)).